Consider the following 534-residue polypeptide: Chaperonin GroEL 3 (534 aa).

Residues Thr31–Pro34, Gly416, Asn479–Leu481, and Asp495 contribute to the ATP site.

This sequence belongs to the chaperonin (HSP60) family. As to quaternary structure, forms a cylinder of 14 subunits composed of two heptameric rings stacked back-to-back. Interacts with the co-chaperonin GroES.

The protein localises to the cytoplasm. The catalysed reaction is ATP + H2O + a folded polypeptide = ADP + phosphate + an unfolded polypeptide.. Functionally, together with its co-chaperonin GroES, plays an essential role in assisting protein folding. The GroEL-GroES system forms a nano-cage that allows encapsulation of the non-native substrate proteins and provides a physical environment optimized to promote and accelerate protein folding. This Protochlamydia amoebophila (strain UWE25) protein is Chaperonin GroEL 3.